The chain runs to 61 residues: Small ribosomal subunit protein uS14 (61 aa).

The Zn(2+) site is built by Cys24, Cys27, Cys40, and Cys43.

Belongs to the universal ribosomal protein uS14 family. Zinc-binding uS14 subfamily. As to quaternary structure, part of the 30S ribosomal subunit. Contacts proteins S3 and S10. Requires Zn(2+) as cofactor.

Its function is as follows. Binds 16S rRNA, required for the assembly of 30S particles and may also be responsible for determining the conformation of the 16S rRNA at the A site. The polypeptide is Small ribosomal subunit protein uS14 (Mycoplasmopsis agalactiae (strain NCTC 10123 / CIP 59.7 / PG2) (Mycoplasma agalactiae)).